The following is a 398-amino-acid chain: S-adenosylmethionine decarboxylase proenzyme (398 aa).

Active-site residues include Glu-18 and Glu-21. Ser-78 functions as the Schiff-base intermediate with substrate; via pyruvic acid in the catalytic mechanism. Ser-78 carries the pyruvic acid (Ser); by autocatalysis modification. Cys-92 serves as the catalytic Proton donor; for catalytic activity. Catalysis depends on proton acceptor; for processing activity residues Ser-243 and His-256.

This sequence belongs to the eukaryotic AdoMetDC family. Pyruvate is required as a cofactor. In terms of processing, is synthesized initially as an inactive proenzyme. Formation of the active enzyme involves a self-maturation process in which the active site pyruvoyl group is generated from an internal serine residue via an autocatalytic post-translational modification. Two non-identical subunits are generated from the proenzyme in this reaction, and the pyruvate is formed at the N-terminus of the alpha chain, which is derived from the carboxyl end of the proenzyme. The post-translation cleavage follows an unusual pathway, termed non-hydrolytic serinolysis, in which the side chain hydroxyl group of the serine supplies its oxygen atom to form the C-terminus of the beta chain, while the remainder of the serine residue undergoes an oxidative deamination to produce ammonia and the pyruvoyl group blocking the N-terminus of the alpha chain.

The enzyme catalyses S-adenosyl-L-methionine + H(+) = S-adenosyl 3-(methylsulfanyl)propylamine + CO2. The protein operates within amine and polyamine biosynthesis; S-adenosylmethioninamine biosynthesis; S-adenosylmethioninamine from S-adenosyl-L-methionine: step 1/1. The chain is S-adenosylmethionine decarboxylase proenzyme (SAMDC) from Oryza sativa subsp. japonica (Rice).